The primary structure comprises 952 residues: UvrABC system protein A (952 aa).

38 to 45 serves as a coordination point for ATP; that stretch reads GLSGSGKS. The segment at 259–286 adopts a C4-type zinc-finger fold; sequence CDKCGFSISELEPRLFSFNSPLGSCSYC. 2 ABC transporter domains span residues 316–595 and 615–944; these read FKNI…SNSI and GNGK…QYLS. 647 to 654 is an ATP binding site; sequence GVSGSGKS. The C4-type zinc finger occupies 746–772; the sequence is CDKCFGDGVIRIEMHFLPDVYVKCEVC.

The protein belongs to the ABC transporter superfamily. UvrA family. As to quaternary structure, forms a heterotetramer with UvrB during the search for lesions.

The protein resides in the cytoplasm. The UvrABC repair system catalyzes the recognition and processing of DNA lesions. UvrA is an ATPase and a DNA-binding protein. A damage recognition complex composed of 2 UvrA and 2 UvrB subunits scans DNA for abnormalities. When the presence of a lesion has been verified by UvrB, the UvrA molecules dissociate. The sequence is that of UvrABC system protein A from Mycoplasma genitalium (strain ATCC 33530 / DSM 19775 / NCTC 10195 / G37) (Mycoplasmoides genitalium).